The following is a 778-amino-acid chain: Endonuclease MutS2 (778 aa).

329–336 contacts ATP; the sequence is GPNTGGKT. One can recognise a Smr domain in the interval 703–778; the sequence is LDLRGKRYEE…GSGCTIVTFK (76 aa).

This sequence belongs to the DNA mismatch repair MutS family. MutS2 subfamily. Homodimer. Binds to stalled ribosomes, contacting rRNA.

Endonuclease that is involved in the suppression of homologous recombination and thus may have a key role in the control of bacterial genetic diversity. Its function is as follows. Acts as a ribosome collision sensor, splitting the ribosome into its 2 subunits. Detects stalled/collided 70S ribosomes which it binds and splits by an ATP-hydrolysis driven conformational change. Acts upstream of the ribosome quality control system (RQC), a ribosome-associated complex that mediates the extraction of incompletely synthesized nascent chains from stalled ribosomes and their subsequent degradation. Probably generates substrates for RQC. The chain is Endonuclease MutS2 from Streptococcus suis (strain 98HAH33).